The sequence spans 148 residues: UPF0260 protein Maqu_1608 (148 aa).

This sequence belongs to the UPF0260 family.

This Marinobacter nauticus (strain ATCC 700491 / DSM 11845 / VT8) (Marinobacter aquaeolei) protein is UPF0260 protein Maqu_1608.